The sequence spans 338 residues: Nuclear hormone receptor family member nhr-52 (338 aa).

Positions 1–75 form a DNA-binding region, nuclear receptor; the sequence is MKCLVCCSYA…IGMRFSEPKQ (75 aa). NR C4-type zinc fingers lie at residues 3–23 and 39–63; these read CLVCCSYASSRNFGALSCSAC and CKYDKKCFESFTILPKCQFCRFKKC. The 240-residue stretch at 98 to 337 folds into the NR LBD domain; that stretch reads KDGVHYSNFL…KKLVNDIIIR (240 aa).

This sequence belongs to the nuclear hormone receptor family.

It localises to the nucleus. Its function is as follows. Orphan nuclear receptor. In Caenorhabditis elegans, this protein is Nuclear hormone receptor family member nhr-52 (nhr-52).